The primary structure comprises 337 residues: Large ribosomal subunit protein uL3 (337 aa).

It belongs to the universal ribosomal protein uL3 family. Part of the 50S ribosomal subunit. Forms a cluster with proteins L14 and L24e.

Its function is as follows. One of the primary rRNA binding proteins, it binds directly near the 3'-end of the 23S rRNA, where it nucleates assembly of the 50S subunit. This chain is Large ribosomal subunit protein uL3, found in Methanospirillum hungatei JF-1 (strain ATCC 27890 / DSM 864 / NBRC 100397 / JF-1).